The following is a 447-amino-acid chain: MAFPGSGRSIPGQLCAGVFSGLIQPPLGQKFYCPNGGGAVPSPLPQALSAPQCNGEGRDPEPDRPIGYGAFGVVWSVTDPRDGKRVALKKMPNVFQNLVSCKRVFRELKMLCFFKHDNVLSALDILQPPQIDCFEEIYVITELMQTDLHKVIVSPQPLSSDHIKVFLYQILRGLKYLHSAGILHRDIKPGNLLVNSNCVLKICDFGLARVEELDESQHMTQEVVTQYYRAPEILMGSRHYRSAIDIWSVGCIFAELLGRRILFQAQSPIQQLDLITDLLGTPPLTAMRSACEGARAHILRGPHKPPSLSVLYMLSGEATHEAVHLLCRMLLFDPLKRISAKDALAHPYLEEGRLRYHTCMCHCCYSVSSGRVYTADFEPTATNRFDDSYEKSLTSVWQVKELVHRFITDQHQGKRPPLCINPHSAAFKTFIRSTAWHSSKVSKKEER.

A Protein kinase domain is found at Pro60–Leu349. Residues Ile66–Val74 and Lys89 each bind ATP. Asp186 acts as the Proton acceptor in catalysis.

The protein belongs to the protein kinase superfamily. CMGC Ser/Thr protein kinase family. MAP kinase subfamily. Interacts with sox11, hmgxb4/hmg2l1, rnf138/narf, stat3.1 and mef2a. It depends on Mg(2+) as a cofactor. In terms of tissue distribution, expressed widely in the ectoderm during early gastrula stage when neural induction is taking place. Expressed in the head region of neurula stage embryos. At the end of neurulation, expression becomes localized to the nervous system, and is restricted to the central nervous system, eye and head neural crest cells by the early tadpole stages.

It is found in the nucleus. The protein resides in the cytoplasm. The catalysed reaction is L-seryl-[protein] + ATP = O-phospho-L-seryl-[protein] + ADP + H(+). The enzyme catalyses L-threonyl-[protein] + ATP = O-phospho-L-threonyl-[protein] + ADP + H(+). Its activity is regulated as follows. Activated by tyrosine and threonine phosphorylation. In terms of biological role, negatively regulates Wnt/beta-catenin-signaling during development. Plays a role together with sox11 in neural induction during early embryogenesis. Involved in TGFbeta-mediated mesoderm induction in early embryos, acting downstream of map3k7/tak1 to phosphorylate stat3.1. Augments the rnf138/narf-directed ubiquitination and degradation of tcf/lef by enhancing the association of rnf138/narf and tcf/lef. Phosphorylates mef2a to play a role in anterior neural development, including eye formation. This Xenopus laevis (African clawed frog) protein is Serine/threonine-protein kinase NLK2 (nlk.2).